Reading from the N-terminus, the 510-residue chain is Bifunctional purine biosynthesis protein PurH (510 aa).

The 142-residue stretch at 1 to 142 (MRALLSVSDK…KNYKDVMVLC (142 aa)) folds into the MGS-like domain.

Belongs to the PurH family.

The enzyme catalyses (6R)-10-formyltetrahydrofolate + 5-amino-1-(5-phospho-beta-D-ribosyl)imidazole-4-carboxamide = 5-formamido-1-(5-phospho-D-ribosyl)imidazole-4-carboxamide + (6S)-5,6,7,8-tetrahydrofolate. It catalyses the reaction IMP + H2O = 5-formamido-1-(5-phospho-D-ribosyl)imidazole-4-carboxamide. It participates in purine metabolism; IMP biosynthesis via de novo pathway; 5-formamido-1-(5-phospho-D-ribosyl)imidazole-4-carboxamide from 5-amino-1-(5-phospho-D-ribosyl)imidazole-4-carboxamide (10-formyl THF route): step 1/1. It functions in the pathway purine metabolism; IMP biosynthesis via de novo pathway; IMP from 5-formamido-1-(5-phospho-D-ribosyl)imidazole-4-carboxamide: step 1/1. The chain is Bifunctional purine biosynthesis protein PurH from Campylobacter jejuni subsp. doylei (strain ATCC BAA-1458 / RM4099 / 269.97).